A 269-amino-acid chain; its full sequence is Zinc transporter ZupT (269 aa).

Helical transmembrane passes span 12 to 32, 41 to 61, 75 to 95, 126 to 146, 152 to 172, 187 to 207, 211 to 231, and 249 to 269; these read AFSITLAAGLFTVLGSGLVMF, LSFGLAFAGGAMVYVSLTEIF, DHAFAAATMAFLAGMGGIALI, MMAAFAITAHNFPEGLATFFA, AVGMPLALAIAIHNIPEGISI, VWACLLSGLAEPLGAALGYLV, FLSPAVFGSVFGVIAGVMVFL, and TVYGLTTGMAVIAVSLVLFHF. 2 residues coordinate Fe(2+): Asn-136 and Glu-139. Zn(2+) is bound by residues Glu-139 and His-164. Positions 165, 168, and 197 each coordinate Fe(2+). Residue Glu-168 participates in Zn(2+) binding.

Belongs to the ZIP transporter (TC 2.A.5) family. ZupT subfamily.

It is found in the cell inner membrane. It catalyses the reaction Zn(2+)(in) = Zn(2+)(out). Its function is as follows. Mediates zinc uptake. May also transport other divalent cations. This Neisseria meningitidis serogroup B (strain ATCC BAA-335 / MC58) protein is Zinc transporter ZupT.